Here is a 508-residue protein sequence, read N- to C-terminus: Cell death protein 3 (508 aa).

A propeptide spanning residues 1-223 (MMRQDRRNLL…FHEEDMNYVD (223 aa)) is cleaved from the precursor. The CARD domain occupies 2–91 (MRQDRRNLLE…HELAAVLEPL (90 aa)). Disordered regions lie at residues 106–130 (PMSP…TRVH) and 148–184 (YTRA…SSAN). The span at 118–127 (LSPSTFSSPT) shows a compositional bias: polar residues. Residues 171–184 (SPSNSFQSQPSSAN) show a composition bias toward low complexity. Active-site residues include His-317 and Cys-360. Positions 392 to 407 (GPLFNFLGCVRPQAQQ) are required for interaction with ced-4.

This sequence belongs to the peptidase C14A family. The active form is probably a heterodimer of the p17 subunit with either the p15 or p13 subunit which are all derived from the precursor by autocatalysis. Interacts with octameric ced-4 (two ced-3 zymogens per one ced-4 octamer); the interaction causes the autoproteolytic cleavage and activation of ced-3. Processed ced-3 also interacts with ced-4 octamer to form a stable holoenzyme. Interacts (via large subunit p17) with csp-3; the interaction prevents ced-3 autoactivation and delays ced-4-induced ced-3 processing. Interacts (via large subunit p17 or small subunit p13 or p15) with csp-2; the interaction inhibits ced-3 autoactivation. Interacts (via propeptide) with nucleoporin npp-14; the interaction tethers ced-3 to the nuclear membrane and prevents its autoprocessing in absence of ced-4. Interacts with dct-1. May form a complex composed of ced-3, ced-4 and mac-1. Post-translationally, autocatalytic cleavage removes the propeptide and generates the catalytic subunit p17 and two non-catalytic subunits p15 and p13; autoproteolysis is induced by ced-4 oligomer. Cleaved by caspase csp-1 probably at Asp-146 and Asp-376.

It localises to the nucleus membrane. Its subcellular location is the perikaryon. The protein resides in the synapse. It is found in the mitochondrion. The protein localises to the cytoplasm. It localises to the perinuclear region. It catalyses the reaction Strict requirement for an Asp residue at position P1 and has a preferred cleavage sequence of Asp-Glu-Val-Asp-|-.. With respect to regulation, octameric ced-4 activates zymogen autoprocessing and enhances activity of processed ced-3. Zymogen autoactivation is inhibited by csp-3. csp-3 has no effect on active ced-3. Zymogen autoactivation is inhibited by csp-2. Inhibited by cysteine protease inhibitor iodoacetic acid (CH3COOI). Inhibited by benzyloxycarbonyl-DEVD-fluoro-methyl ketone (zDEVD-fmk). Inhibited by benzyloxycarbonyl-VAD-fluoro-methyl ketone (zVAD-fmk). Not inhibited by N-[N-(L-3-transcarboxirane-2-carbonyl)-leucyl]-agmatine (E-64) or by the serine and cysteine protease inhibitor L-1-chloro-3-[4-to-osylamido]-7-amino-2-heptanone (TLCK). Acts as a cysteine protease in controlling programmed cell death (apoptosis) by proteolytically activating or inactivating a wide range of substrates. Component of the egl-1, ced-9, ced-4 and ced-3 apoptotic signaling cascade required for the initiation of programmed cell death in cells fated to die during embryonic and postembryonic development. During oogenesis, required for germline apoptosis downstream of ced-9 and ced-4 but independently of egl-1. By cleaving and activating ced-8, promotes phosphatidylserine exposure on the surface of apoptotic cells; phosphatidylserine is a specific marker only present at the surface of apoptotic cells and acts as a specific signal for engulfment. By cleaving and converting dcr-1 into a deoxyribonuclease (DNase), promotes apoptotic chromosomal DNA fragmentation. By cleaving mitochondrial fission protein drp-1, may regulate the removal of mitochondria during apoptosis. During germline apoptosis, cleaves translation initiation factor ifg-1 (isoform p170) promoting cap-independent translation. During male tail morphogenesis, promotes apoptosis of the tail-spike cell downstream of ced-4 but independently of egl-1 and ced-9. By cleaving cnt-1, prevents the activation of the prosurvival akt-1/2 signaling pathway and thus promotes apoptosis. Downstream of ced-4, may play a role in sex-specific cell apoptosis by cleaving sex-determining protein fem-1. May regulate germline apoptosis in response to DNA damage, probably downstream of let-60/ras and mpk-1 pathway. Cleaves ced-9 in vitro. Cleaves csp-2 isoform b resulting in the removal of the propeptide and the generation of csp-2 subunit p31 in vitro. Independently of its apoptotic role has additional functions. Probably by cleaving and thereby activating actin-severing protein gsnl-1, required for the elimination of transient presynaptic components during larval development downstream of egl-1, ced-9 and ced-4 pathway. Together with ain-1, a component of the miRNA-induced-silencing complex (miRISC), regulates temporal cell fate patterning during larval development. Acts in cell fate patterning by cleaving heterochronic protein lin-28, likely promoting its degradation. Also cleaves heterochronic protein lin-14 and exonuclease disl-2 in vitro. Downstream of calreticulin crt-1 and ced-4 and independently of egl-1 and ced-9, plays a role in the initial steps of axonal regrowth following axotomy. Cleaves 14-3-3-like protein ftt-2, tubulin tbb-2 and calreticulin crt-1 in vitro. Plays also a role in resistance to S.typhimurium-mediated infection. The protein is Cell death protein 3 of Caenorhabditis remanei (Caenorhabditis vulgaris).